A 567-amino-acid polypeptide reads, in one-letter code: Urease subunit alpha (567 aa).

The region spanning 129-567 (GGVDSHIHFI…LPLAQRYFLF (439 aa)) is the Urease domain. Residues His134, His136, and Lys217 each coordinate Ni(2+). At Lys217 the chain carries N6-carboxylysine. His219 contacts substrate. Ni(2+)-binding residues include His246 and His272. His320 (proton donor) is an active-site residue. Ni(2+) is bound at residue Asp360.

Belongs to the metallo-dependent hydrolases superfamily. Urease alpha subunit family. As to quaternary structure, heterotrimer of UreA (gamma), UreB (beta) and UreC (alpha) subunits. Three heterotrimers associate to form the active enzyme. The cofactor is Ni cation. Carboxylation allows a single lysine to coordinate two nickel ions.

The protein localises to the cytoplasm. The enzyme catalyses urea + 2 H2O + H(+) = hydrogencarbonate + 2 NH4(+). The protein operates within nitrogen metabolism; urea degradation; CO(2) and NH(3) from urea (urease route): step 1/1. The sequence is that of Urease subunit alpha from Pseudomonas putida (strain ATCC 47054 / DSM 6125 / CFBP 8728 / NCIMB 11950 / KT2440).